The chain runs to 177 residues: ATP synthase subunit delta (177 aa).

The protein belongs to the ATPase delta chain family. F-type ATPases have 2 components, F(1) - the catalytic core - and F(0) - the membrane proton channel. F(1) has five subunits: alpha(3), beta(3), gamma(1), delta(1), epsilon(1). F(0) has three main subunits: a(1), b(2) and c(10-14). The alpha and beta chains form an alternating ring which encloses part of the gamma chain. F(1) is attached to F(0) by a central stalk formed by the gamma and epsilon chains, while a peripheral stalk is formed by the delta and b chains.

Its subcellular location is the cell inner membrane. Its function is as follows. F(1)F(0) ATP synthase produces ATP from ADP in the presence of a proton or sodium gradient. F-type ATPases consist of two structural domains, F(1) containing the extramembraneous catalytic core and F(0) containing the membrane proton channel, linked together by a central stalk and a peripheral stalk. During catalysis, ATP synthesis in the catalytic domain of F(1) is coupled via a rotary mechanism of the central stalk subunits to proton translocation. In terms of biological role, this protein is part of the stalk that links CF(0) to CF(1). It either transmits conformational changes from CF(0) to CF(1) or is implicated in proton conduction. The polypeptide is ATP synthase subunit delta (Haemophilus ducreyi (strain 35000HP / ATCC 700724)).